The chain runs to 379 residues: Cytochrome b (379 aa).

The next 4 membrane-spanning stretches (helical) occupy residues 33-53 (FGSL…FLAM), 77-98 (WLIR…FIHV), 113-133 (WNIG…GYVL), and 178-198 (FFAF…VHLL). The heme b site is built by histidine 83 and histidine 97. Heme b contacts are provided by histidine 182 and histidine 196. Histidine 201 is a binding site for a ubiquinone. Transmembrane regions (helical) follow at residues 226–246 (IKDL…ALFF), 288–308 (LGGV…PLLN), 320–340 (ITQT…WIGG), and 347–367 (FTMI…ILXP).

It belongs to the cytochrome b family. The cytochrome bc1 complex contains 11 subunits: 3 respiratory subunits (MT-CYB, CYC1 and UQCRFS1), 2 core proteins (UQCRC1 and UQCRC2) and 6 low-molecular weight proteins (UQCRH/QCR6, UQCRB/QCR7, UQCRQ/QCR8, UQCR10/QCR9, UQCR11/QCR10 and a cleavage product of UQCRFS1). This cytochrome bc1 complex then forms a dimer. The cofactor is heme b.

It localises to the mitochondrion inner membrane. Component of the ubiquinol-cytochrome c reductase complex (complex III or cytochrome b-c1 complex) that is part of the mitochondrial respiratory chain. The b-c1 complex mediates electron transfer from ubiquinol to cytochrome c. Contributes to the generation of a proton gradient across the mitochondrial membrane that is then used for ATP synthesis. This chain is Cytochrome b (MT-CYB), found in Akodon toba (Chaco grass mouse).